A 152-amino-acid chain; its full sequence is ATP synthase epsilon chain 2 (152 aa).

This sequence belongs to the ATPase epsilon chain family. F-type ATPases have 2 components, CF(1) - the catalytic core - and CF(0) - the membrane proton channel. CF(1) has five subunits: alpha(3), beta(3), gamma(1), delta(1), epsilon(1). CF(0) has three main subunits: a, b and c.

Its subcellular location is the cell inner membrane. Produces ATP from ADP in the presence of a proton gradient across the membrane. In Burkholderia orbicola (strain AU 1054), this protein is ATP synthase epsilon chain 2.